Here is a 104-residue protein sequence, read N- to C-terminus: Large ribosomal subunit protein bL21 (104 aa).

This sequence belongs to the bacterial ribosomal protein bL21 family. In terms of assembly, part of the 50S ribosomal subunit. Contacts protein L20.

Its function is as follows. This protein binds to 23S rRNA in the presence of protein L20. The protein is Large ribosomal subunit protein bL21 of Streptococcus gordonii (strain Challis / ATCC 35105 / BCRC 15272 / CH1 / DL1 / V288).